We begin with the raw amino-acid sequence, 417 residues long: MGTRRRSARARARPPLAMPLAVLLLFACSSGVAAAAAQGIERIKDDPVGKLKVYVYELPPKYNKNIVAKDSRCLSHMFATEIFMHRFLLSSAIRTSNPDEADWFYTPVYTTCDLTPWGHPLTTKSPRMMRSAIKFISKYWPYWNRTEGADHFFVVPHDFAACFYFQEAKAIERGILPVLRRATLVQTFGQKNHACLKDGSITVPPYTPAHKIRAHLVPPETPRSIFVYFRGLFYDTSNDPEGGYYARGARASVWENFKNNPMFDISTDHPQTYYEDMQRAVFCLCPLGWAPWSPRLVEAVVFGCIPVIIADDIVLPFSDAIPWEEIAVFVAEDDVPQLDTILTSIPTEVILRKQAMLAEPSMKQTMLFPQPAEPGDGFHQVMNALARKLPHGRDVFLKPGQKVLNWTEGTREDLKPW.

Residues 1–15 (MGTRRRSARARARPP) are Cytoplasmic-facing. A helical; Signal-anchor for type II membrane protein transmembrane segment spans residues 16–36 (LAMPLAVLLLFACSSGVAAAA). At 37–417 (AQGIERIKDD…EGTREDLKPW (381 aa)) the chain is on the lumenal side. Asparagine 144 and asparagine 405 each carry an N-linked (GlcNAc...) asparagine glycan.

This sequence belongs to the glycosyltransferase 47 family.

The protein resides in the golgi apparatus membrane. Involved in the synthesis of glucuronoxylan hemicellulose in secondary cell walls. The protein is Probable glucuronosyltransferase GUT1 (GUT1) of Oryza sativa subsp. japonica (Rice).